Consider the following 249-residue polypeptide: Phosphoribosylaminoimidazole-succinocarboxamide synthase (249 aa).

The protein belongs to the SAICAR synthetase family.

The enzyme catalyses 5-amino-1-(5-phospho-D-ribosyl)imidazole-4-carboxylate + L-aspartate + ATP = (2S)-2-[5-amino-1-(5-phospho-beta-D-ribosyl)imidazole-4-carboxamido]succinate + ADP + phosphate + 2 H(+). It functions in the pathway purine metabolism; IMP biosynthesis via de novo pathway; 5-amino-1-(5-phospho-D-ribosyl)imidazole-4-carboxamide from 5-amino-1-(5-phospho-D-ribosyl)imidazole-4-carboxylate: step 1/2. The protein is Phosphoribosylaminoimidazole-succinocarboxamide synthase of Chloroflexus aurantiacus (strain ATCC 29366 / DSM 635 / J-10-fl).